A 583-amino-acid chain; its full sequence is Thiol:disulfide interchange protein DsbD (583 aa).

A signal peptide spans 1–20; the sequence is MLKRFIFLLVGITLTLSAHA. 2 cysteine pairs are disulfide-bonded: cysteine 123–cysteine 128 and cysteine 200–cysteine 322. A run of 8 helical transmembrane segments spans residues 185–205, 237–257, 261–281, 302–322, 344–364, 375–395, 405–425, and 433–453; these read IFWF…LPML, LTYT…QVAL, PVLI…FGLF, GGAF…ASPC, GLAL…ITLF, WLLK…VFLL, PLMW…VIPT, and VRIV…NLVW. A Thioredoxin domain is found at 440–583; the sequence is TFAVASYPWA…NQFLNWLNQL (144 aa). Cysteines 500 and 503 form a disulfide.

This sequence belongs to the thioredoxin family. DsbD subfamily.

The protein localises to the cell inner membrane. The catalysed reaction is [protein]-dithiol + NAD(+) = [protein]-disulfide + NADH + H(+). It catalyses the reaction [protein]-dithiol + NADP(+) = [protein]-disulfide + NADPH + H(+). In terms of biological role, required to facilitate the formation of correct disulfide bonds in some periplasmic proteins and for the assembly of the periplasmic c-type cytochromes. Acts by transferring electrons from cytoplasmic thioredoxin to the periplasm. This transfer involves a cascade of disulfide bond formation and reduction steps. The chain is Thiol:disulfide interchange protein DsbD from Actinobacillus pleuropneumoniae serotype 5b (strain L20).